The chain runs to 229 residues: Glutathione S-transferase 3 (229 aa).

Ala-2 is modified (blocked amino end (Ala)). A GST N-terminal domain is found at 3 to 83; the sequence is AKPVLYYFNG…YIAGKYNLYG (81 aa). Residues Tyr-9, 54 to 55, and 67 to 68 contribute to the glutathione site; these read QV and QT. Positions 85 to 207 constitute a GST C-terminal domain; it reads DLKERALIDM…LAPGSKRKPI (123 aa).

It belongs to the GST superfamily. Alpha family. As to quaternary structure, homodimer or heterodimer (with a subunit from group CL-4).

Its subcellular location is the cytoplasm. It carries out the reaction RX + glutathione = an S-substituted glutathione + a halide anion + H(+). Functionally, catalyzes the conjugation of GSH to a wide variety of electrophilic alkylating agents. Also involved in the metabolism of lipid hydroperoxides, prostaglandins and leukotriene A4 and in binding of non-substrate hydrophobic ligands such as bile acids, a number of drugs and thyroid hormones. This GST does not exhibit peroxidase activity. The chain is Glutathione S-transferase 3 from Gallus gallus (Chicken).